The primary structure comprises 53 residues: Large ribosomal subunit protein bL33 (53 aa).

Belongs to the bacterial ribosomal protein bL33 family.

This chain is Large ribosomal subunit protein bL33, found in Blochmanniella floridana.